A 329-amino-acid polypeptide reads, in one-letter code: Biotin synthase (329 aa).

In terms of domain architecture, Radical SAM core spans 48–278; it reads FLGTGVDLCS…DRKIAVCGGR (231 aa). [4Fe-4S] cluster is bound by residues cysteine 66, cysteine 70, and cysteine 73. [2Fe-2S] cluster-binding residues include serine 143 and cysteine 203.

This sequence belongs to the radical SAM superfamily. Biotin synthase family. Homodimer. It depends on [4Fe-4S] cluster as a cofactor. The cofactor is [2Fe-2S] cluster.

The enzyme catalyses (4R,5S)-dethiobiotin + (sulfur carrier)-SH + 2 reduced [2Fe-2S]-[ferredoxin] + 2 S-adenosyl-L-methionine = (sulfur carrier)-H + biotin + 2 5'-deoxyadenosine + 2 L-methionine + 2 oxidized [2Fe-2S]-[ferredoxin]. It functions in the pathway cofactor biosynthesis; biotin biosynthesis; biotin from 7,8-diaminononanoate: step 2/2. In terms of biological role, catalyzes the conversion of dethiobiotin (DTB) to biotin by the insertion of a sulfur atom into dethiobiotin via a radical-based mechanism. The protein is Biotin synthase of Geobacter sulfurreducens (strain ATCC 51573 / DSM 12127 / PCA).